The sequence spans 562 residues: MDYKMHFAESLSNIFTNELTQKQILDLIESPKQDEFGDAAFPCFSLAKQYKKAPAIIAKEVAQKLSDPFFTKVEAVGPYVNVFFNRETVSDTVLKTILAEKEEYGHNHFGYEKTVVIDYSSPNIAKPFSMGHLRSTMIGNSLKHIAEKCGYEVVGINYIGDWGTQFGKLITAYKKWGNEAVVKEDPIRELFKLYVQFHEEVTDDEELEEEGRAWFKKLEEGDEEAVELWNWFRHESLKEFSRIYELLGVEFTNFQGEAFYNNLMEDFIGILEEHDLLEESEGALVVNLEEEGMPPCLIRKSDGATIYATRDLTAALYRQNTFGFDKALYVVGPEQSLHFNQFFTVLKKLGYTWVDGMEHVPFGFILKDGKKMSTRKGRIILLEEVLEEAIELAKQNIEEKNPNLKQKDEVAKQVGAGAVIFHDLKNERMHNIEFSLENMLKFEGETGPYVQYTHARACSILRKESVEFETCTFTLKDDHSWNIVKLLNKFPKVIEAACNKNEPSVISKYVLDVAQSFNKYYGNVRILDENAEKDSRLALVYAVTVVLKEGLRLLGVEAPEEM.

The short motif at 122–132 is the 'HIGH' region element; the sequence is PNIAKPFSMGH.

The protein belongs to the class-I aminoacyl-tRNA synthetase family. In terms of assembly, monomer.

The protein resides in the cytoplasm. The catalysed reaction is tRNA(Arg) + L-arginine + ATP = L-arginyl-tRNA(Arg) + AMP + diphosphate. This is Arginine--tRNA ligase 1 from Bacillus thuringiensis subsp. konkukian (strain 97-27).